Here is an 84-residue protein sequence, read N- to C-terminus: Putative antitoxin VapB7 (84 aa).

Its function is as follows. Antitoxin component of a possible type II toxin-antitoxin (TA) system. The cognate toxin is VapC7. In Mycobacterium tuberculosis (strain ATCC 25618 / H37Rv), this protein is Putative antitoxin VapB7 (vapB7).